We begin with the raw amino-acid sequence, 349 residues long: Protein Wnt-7a (349 aa).

Residues 1–31 (MNRKARRCLGHLFLSLGMVYLRIGGFSSVVA) form the signal peptide. Disulfide bonds link Cys73–Cys84, Cys123–Cys131, Cys133–Cys152, Cys200–Cys214, and Cys202–Cys209. N-linked (GlcNAc...) asparagine glycans are attached at residues Asn83 and Asn127. The O-palmitoleoyl serine; by PORCN moiety is linked to residue Ser206. Residues 238-266 (VEPVRASRNKRPTFLKIKKPLSYRKPMDT) are disordered linker. Cystine bridges form between Cys278–Cys309, Cys294–Cys304, Cys308–Cys348, Cys324–Cys339, Cys326–Cys336, and Cys331–Cys332. An N-linked (GlcNAc...) asparagine glycan is attached at Asn295.

This sequence belongs to the Wnt family. Forms a soluble 1:1 complex with AFM; this prevents oligomerization and is required for prolonged biological activity. The complex with AFM may represent the physiological form in body fluids. Interacts with PORCN. Interacts (via intrinsically disordered linker region) with RECK; interaction with RECK confers ligand selectivity for Wnt7 in brain endothelial cells and allows these cells to selectively respond to Wnt7. Interacts with FZD5. Palmitoleoylation is required for efficient binding to frizzled receptors. Depalmitoleoylation leads to Wnt signaling pathway inhibition.

It is found in the secreted. The protein resides in the extracellular space. Its subcellular location is the extracellular matrix. In terms of biological role, ligand for members of the frizzled family of seven transmembrane receptors that functions in the canonical Wnt/beta-catenin signaling pathway. Plays an important role in embryonic development, including dorsal versus ventral patterning during limb development, skeleton development and urogenital tract development. Required for central nervous system (CNS) angiogenesis and blood-brain barrier regulation. Required for normal, sexually dimorphic development of the Mullerian ducts, and for normal fertility in both sexes. Required for normal neural stem cell proliferation in the hippocampus dentate gyrus. Required for normal progress through the cell cycle in neural progenitor cells, for self-renewal of neural stem cells, and for normal neuronal differentiation and maturation. Promotes formation of synapses via its interaction with FZD5. This is Protein Wnt-7a (WNT7A) from Pongo pygmaeus (Bornean orangutan).